Consider the following 209-residue polypeptide: Small ribosomal subunit protein uS4 (209 aa).

Positions 98-161 (TRLDNVVYRM…AKQLRVQEAL (64 aa)) constitute an S4 RNA-binding domain.

The protein belongs to the universal ribosomal protein uS4 family. In terms of assembly, part of the 30S ribosomal subunit. Contacts protein S5. The interaction surface between S4 and S5 is involved in control of translational fidelity.

In terms of biological role, one of the primary rRNA binding proteins, it binds directly to 16S rRNA where it nucleates assembly of the body of the 30S subunit. With S5 and S12 plays an important role in translational accuracy. This chain is Small ribosomal subunit protein uS4, found in Stenotrophomonas maltophilia (strain R551-3).